The primary structure comprises 266 residues: 3-methyl-2-oxobutanoate hydroxymethyltransferase (266 aa).

Residues Asp-45 and Asp-84 each coordinate Mg(2+). 3-methyl-2-oxobutanoate-binding positions include 45–46 (DS), Asp-84, and Lys-112. Glu-114 provides a ligand contact to Mg(2+). Glu-181 acts as the Proton acceptor in catalysis.

Belongs to the PanB family. In terms of assembly, homodecamer; pentamer of dimers. Mg(2+) serves as cofactor.

Its subcellular location is the cytoplasm. The enzyme catalyses 3-methyl-2-oxobutanoate + (6R)-5,10-methylene-5,6,7,8-tetrahydrofolate + H2O = 2-dehydropantoate + (6S)-5,6,7,8-tetrahydrofolate. The protein operates within cofactor biosynthesis; (R)-pantothenate biosynthesis; (R)-pantoate from 3-methyl-2-oxobutanoate: step 1/2. Catalyzes the reversible reaction in which hydroxymethyl group from 5,10-methylenetetrahydrofolate is transferred onto alpha-ketoisovalerate to form ketopantoate. This chain is 3-methyl-2-oxobutanoate hydroxymethyltransferase, found in Pseudomonas syringae pv. tomato (strain ATCC BAA-871 / DC3000).